Here is a 170-residue protein sequence, read N- to C-terminus: Neurotensin/neuromedin N (170 aa).

A signal peptide spans 1–23 (MMAGMKIQLVCMILLAFSSWSLC).

Belongs to the neurotensin family. Interacts with NTSR1. Interacts with SORT1. Interacts with SORL1. In terms of processing, neurotensin is cleaved and degraded by Angiotensin-converting enzyme (ACE) and neprilysin (MME). Brain and gut.

It localises to the secreted. The protein localises to the cytoplasmic vesicle. Its subcellular location is the secretory vesicle. Neurotensin may play an endocrine or paracrine role in the regulation of fat metabolism. It causes contraction of smooth muscle. This chain is Neurotensin/neuromedin N (NTS), found in Bos taurus (Bovine).